Here is a 134-residue protein sequence, read N- to C-terminus: NAD(P)H-quinone oxidoreductase subunit 3 (134 aa).

The next 3 helical transmembrane spans lie at 20–40 (GYDAFLGFLLVSAAVPILALV), 78–98 (MFALVFVIFDVETVFLYPWAV), and 103–123 (LGLLAFIEALIFIAILLVALA).

It belongs to the complex I subunit 3 family. NDH-1 can be composed of about 15 different subunits; different subcomplexes with different compositions have been identified which probably have different functions.

The protein resides in the cellular thylakoid membrane. The enzyme catalyses a plastoquinone + NADH + (n+1) H(+)(in) = a plastoquinol + NAD(+) + n H(+)(out). The catalysed reaction is a plastoquinone + NADPH + (n+1) H(+)(in) = a plastoquinol + NADP(+) + n H(+)(out). Functionally, NDH-1 shuttles electrons from an unknown electron donor, via FMN and iron-sulfur (Fe-S) centers, to quinones in the respiratory and/or the photosynthetic chain. The immediate electron acceptor for the enzyme in this species is believed to be plastoquinone. Couples the redox reaction to proton translocation, and thus conserves the redox energy in a proton gradient. Cyanobacterial NDH-1 also plays a role in inorganic carbon-concentration. In Prochlorococcus marinus (strain MIT 9303), this protein is NAD(P)H-quinone oxidoreductase subunit 3.